The following is a 459-amino-acid chain: Putrescine aminotransferase (459 aa).

Pyridoxal 5'-phosphate is bound by residues 150–151 (GT) and Q274. N6-(pyridoxal phosphate)lysine is present on K300. T332 provides a ligand contact to pyridoxal 5'-phosphate.

This sequence belongs to the class-III pyridoxal-phosphate-dependent aminotransferase family. Putrescine aminotransferase subfamily. Pyridoxal 5'-phosphate serves as cofactor.

It carries out the reaction an alkane-alpha,omega-diamine + 2-oxoglutarate = an omega-aminoaldehyde + L-glutamate. It catalyses the reaction putrescine + 2-oxoglutarate = 1-pyrroline + L-glutamate + H2O. The enzyme catalyses cadaverine + 2-oxoglutarate = 5-aminopentanal + L-glutamate. It functions in the pathway amine and polyamine degradation; putrescine degradation; 4-aminobutanal from putrescine (transaminase route): step 1/1. Functionally, catalyzes the aminotransferase reaction from putrescine to 2-oxoglutarate, leading to glutamate and 4-aminobutanal, which spontaneously cyclizes to form 1-pyrroline. This is the first step in one of two pathways for putrescine degradation, where putrescine is converted into 4-aminobutanoate (gamma-aminobutyrate or GABA) via 4-aminobutanal. Also functions as a cadaverine transaminase in a a L-lysine degradation pathway to succinate that proceeds via cadaverine, glutarate and L-2-hydroxyglutarate. This chain is Putrescine aminotransferase, found in Klebsiella pneumoniae subsp. pneumoniae (strain ATCC 700721 / MGH 78578).